A 119-amino-acid chain; its full sequence is Outer membrane protein assembly factor BamE (119 aa).

The N-terminal stretch at 1–19 (MQFTKWFIALPLAVTALSG) is a signal peptide. The N-palmitoyl cysteine moiety is linked to residue Cys-20. Cys-20 is lipidated: S-diacylglycerol cysteine.

This sequence belongs to the BamE family. Part of the Bam complex.

Its subcellular location is the cell outer membrane. Functionally, part of the outer membrane protein assembly complex, which is involved in assembly and insertion of beta-barrel proteins into the outer membrane. The polypeptide is Outer membrane protein assembly factor BamE (Vibrio cholerae serotype O1 (strain ATCC 39541 / Classical Ogawa 395 / O395)).